A 396-amino-acid polypeptide reads, in one-letter code: tRNA (guanine-N(7)-)-methyltransferase non-catalytic subunit wuho (396 aa).

4 WD repeats span residues 75–115 (KVEV…AQLL), 162–201 (GHLS…DIHS), 205–243 (GHKE…ELLL), and 302–342 (AGTW…RASG).

The protein belongs to the WD repeat TRM82 family. Forms a heterodimer with the catalytic subunit Mettl1. Interacts with mei-P26 and weakly interacts with bgcn; required for the function or formation of the mei-P26-bgcn-bam-sxl complex. Interacts with nanos; may be involved in mei-P26-dependent derepression of the BMP signaling pathway. Interacts with Myc; the interaction may be mediated by mei-P26 and may be involved in the regulation of ribosome biogenesis. In testis, it is present at high level in hub cells, a niche for germline stem cells of testis. Ubiquitously expressed in all testicular cells throughout spermatogenesis. Ubiquitously expressed in all germline and somatic cells of the ovary.

It localises to the nucleus. The protein resides in the cytoplasm. It participates in tRNA modification; N(7)-methylguanine-tRNA biosynthesis. Functionally, required for the Mettl1-dependent formation of N(7)-methylguanine at position 46 (m7G46) in tRNA. In the Mettl1-wuho methyltransferase complex, it is required to stabilize and induce conformational changes of the catalytic subunit. Required for binding of nanos mRNA and repression of translation by the mei-P26-bgcn-bam-sxl complex. May cooperate with mei-P26 and nanos to derepress the BMP signaling pathway. May cooperate with mei-P26 to suppress expression of a subset of microRNAs. May cooperate with mei-P26 to regulate bam expression levels in germline cells during gametogenesis. Required to promote mitosis to meiosis transition during gametogenesis. May regulate germline cell division in part by regulating ribosome biogenesis. The chain is tRNA (guanine-N(7)-)-methyltransferase non-catalytic subunit wuho from Drosophila pseudoobscura pseudoobscura (Fruit fly).